A 301-amino-acid polypeptide reads, in one-letter code: Glycine--tRNA ligase alpha subunit (301 aa).

It belongs to the class-II aminoacyl-tRNA synthetase family. As to quaternary structure, tetramer of two alpha and two beta subunits.

It localises to the cytoplasm. It carries out the reaction tRNA(Gly) + glycine + ATP = glycyl-tRNA(Gly) + AMP + diphosphate. The polypeptide is Glycine--tRNA ligase alpha subunit (Shewanella halifaxensis (strain HAW-EB4)).